The sequence spans 356 residues: S-adenosylmethionine:tRNA ribosyltransferase-isomerase (356 aa).

Belongs to the QueA family. Monomer.

It is found in the cytoplasm. The catalysed reaction is 7-aminomethyl-7-carbaguanosine(34) in tRNA + S-adenosyl-L-methionine = epoxyqueuosine(34) in tRNA + adenine + L-methionine + 2 H(+). It functions in the pathway tRNA modification; tRNA-queuosine biosynthesis. Its function is as follows. Transfers and isomerizes the ribose moiety from AdoMet to the 7-aminomethyl group of 7-deazaguanine (preQ1-tRNA) to give epoxyqueuosine (oQ-tRNA). This chain is S-adenosylmethionine:tRNA ribosyltransferase-isomerase, found in Xanthomonas campestris pv. campestris (strain 8004).